The sequence spans 273 residues: MAIKKYKPTSAGRRHMTSADFADITAAKPEKSLVEKLNKSGGRNNAGRITKRHTGGGHKRKYRVIDFRREKKEIPAKIASIEYDPNRSARIALACYADGEKRYILAPLGLKVGDVVIASEQADIKPGNALSIRSIPLGTWVHNIELKIGKGGQLARSAGTYAMIAAKEGKYAQLRLPSGEVRLVLQDCCATVGQVGNVQHENVKIGKAGRNRWLGKRPQSRGVAMNPVDHPHGGGEGKSSGGRHPVTPWGVPTKGYKTRVNKRTDRFIVRRKK.

The tract at residues 213–261 is disordered; that stretch reads WLGKRPQSRGVAMNPVDHPHGGGEGKSSGGRHPVTPWGVPTKGYKTRVN.

Belongs to the universal ribosomal protein uL2 family. In terms of assembly, part of the 50S ribosomal subunit. Forms a bridge to the 30S subunit in the 70S ribosome.

In terms of biological role, one of the primary rRNA binding proteins. Required for association of the 30S and 50S subunits to form the 70S ribosome, for tRNA binding and peptide bond formation. It has been suggested to have peptidyltransferase activity; this is somewhat controversial. Makes several contacts with the 16S rRNA in the 70S ribosome. The protein is Large ribosomal subunit protein uL2 of Syntrophotalea carbinolica (strain DSM 2380 / NBRC 103641 / GraBd1) (Pelobacter carbinolicus).